The primary structure comprises 142 residues: Small ribosomal subunit protein uS12y (142 aa).

Pro61 carries the post-translational modification Hydroxyproline.

It belongs to the universal ribosomal protein uS12 family.

The sequence is that of Small ribosomal subunit protein uS12y (RPS23B) from Arabidopsis thaliana (Mouse-ear cress).